The primary structure comprises 651 residues: Probable endo-1,3(4)-beta-glucanase NFIA_089530 (651 aa).

The first 21 residues, 1-21, serve as a signal peptide directing secretion; it reads MAPSSLFLSVGSLIASSLVSA. Residues 36–289 enclose the GH16 domain; it reads ESWQGESFIN…WAGNVFAEST (254 aa). Asparagine 64 carries an N-linked (GlcNAc...) asparagine glycan. Glutamate 145 (nucleophile) is an active-site residue. Glutamate 150 (proton donor) is an active-site residue. Residue asparagine 200 is glycosylated (N-linked (GlcNAc...) asparagine). Over residues 364 to 378 the composition is skewed to low complexity; sequence PVPAETTAVPQPAQT. Disordered stretches follow at residues 364–422 and 508–557; these read PVPA…ESTS and SEIP…PVPA. Polar residues-rich tracts occupy residues 379–400 and 520–535; these read NTVA…TTVP and QAVS…TAQG. The segment covering 542–557 has biased composition (low complexity); it reads SIASASAAPSTIPVPA. Asparagine 629 carries GPI-anchor amidated asparagine lipidation. Positions 630-651 are cleaved as a propeptide — removed in mature form; that stretch reads GANRMSVGLSGLIGVMFIAALA.

This sequence belongs to the glycosyl hydrolase 16 family.

Its subcellular location is the cell membrane. The enzyme catalyses Endohydrolysis of (1-&gt;3)- or (1-&gt;4)-linkages in beta-D-glucans when the glucose residue whose reducing group is involved in the linkage to be hydrolyzed is itself substituted at C-3.. Functionally, mixed-linked glucanase involved in the degradation of complex natural cellulosic substrates. This Neosartorya fischeri (strain ATCC 1020 / DSM 3700 / CBS 544.65 / FGSC A1164 / JCM 1740 / NRRL 181 / WB 181) (Aspergillus fischerianus) protein is Probable endo-1,3(4)-beta-glucanase NFIA_089530.